The chain runs to 274 residues: Erythronate-4-phosphate dehydrogenase (274 aa).

Aspartate 34 is a binding site for NAD(+). Arginine 95 is an active-site residue. Position 119 (aspartate 119) interacts with NAD(+). Residue glutamate 124 is part of the active site. The Proton donor role is filled by histidine 141. Glycine 144 is an NAD(+) binding site. Position 145 (tyrosine 145) interacts with substrate.

This sequence belongs to the D-isomer specific 2-hydroxyacid dehydrogenase family. PdxB subfamily. As to quaternary structure, homodimer.

Its subcellular location is the cytoplasm. The enzyme catalyses 4-phospho-D-erythronate + NAD(+) = (R)-3-hydroxy-2-oxo-4-phosphooxybutanoate + NADH + H(+). It participates in cofactor biosynthesis; pyridoxine 5'-phosphate biosynthesis; pyridoxine 5'-phosphate from D-erythrose 4-phosphate: step 2/5. Catalyzes the oxidation of erythronate-4-phosphate to 3-hydroxy-2-oxo-4-phosphonooxybutanoate. This is Erythronate-4-phosphate dehydrogenase (pdxB) from Shewanella sp. (strain DB6705).